The sequence spans 1295 residues: DNA (cytosine-5)-methyltransferase CMT2 (1295 aa).

Disordered stretches follow at residues 1 to 23, 61 to 91, and 249 to 287; these read MLSP…SSSR, RRST…GKSQ, and NSSK…GKGM. Residues 61–72 show a composition bias toward polar residues; the sequence is RRSTTLNCNSPE. The 116-residue stretch at 578–693 folds into the BAH domain; the sequence is HTFSLGDFAY…VEYSTFQTLR (116 aa). The region spanning 727-1268 is the SAM-dependent MTase C5-type domain; it reads LPVLDLYSGC…YSLGMAFRGL (542 aa). A disordered region spans residues 814-835; the sequence is SVNSTKETSGSSSSSDDDSDSE. Residues 837–902 enclose the Chromo domain; the sequence is YEVEKLVDIC…SGFKSKILPL (66 aa). The active site involves Cys915.

This sequence belongs to the class I-like SAM-binding methyltransferase superfamily. C5-methyltransferase family.

The protein resides in the nucleus. The catalysed reaction is a 2'-deoxycytidine in DNA + S-adenosyl-L-methionine = a 5-methyl-2'-deoxycytidine in DNA + S-adenosyl-L-homocysteine + H(+). May be involved in the CpXpG methylation and in gene silencing. The polypeptide is DNA (cytosine-5)-methyltransferase CMT2 (CMT2) (Arabidopsis thaliana (Mouse-ear cress)).